The chain runs to 268 residues: Phosphatidylglycerol--prolipoprotein diacylglyceryl transferase (268 aa).

7 helical membrane passes run 27–47 (PALR…MWLL), 66–86 (LLFY…VLFY), 104–124 (GGMS…YIAW), 130–150 (FFAV…AGRI), 181–201 (PSQL…LYWF), 208–228 (VGAV…IVET), and 242–262 (FMTM…YLIL). Residue R149 participates in a 1,2-diacyl-sn-glycero-3-phospho-(1'-sn-glycerol) binding.

It belongs to the Lgt family.

The protein resides in the cell inner membrane. It catalyses the reaction L-cysteinyl-[prolipoprotein] + a 1,2-diacyl-sn-glycero-3-phospho-(1'-sn-glycerol) = an S-1,2-diacyl-sn-glyceryl-L-cysteinyl-[prolipoprotein] + sn-glycerol 1-phosphate + H(+). It functions in the pathway protein modification; lipoprotein biosynthesis (diacylglyceryl transfer). Catalyzes the transfer of the diacylglyceryl group from phosphatidylglycerol to the sulfhydryl group of the N-terminal cysteine of a prolipoprotein, the first step in the formation of mature lipoproteins. This Shewanella sp. (strain ANA-3) protein is Phosphatidylglycerol--prolipoprotein diacylglyceryl transferase.